Consider the following 519-residue polypeptide: Polyamine aminopropyltransferase (519 aa).

Helical transmembrane passes span 17–37 (LLLVSVAICAASGLVYELALV), 53–73 (LIVAGYVAALGVGAILVKPFL), 86–106 (LLGLIGGLSALVLYMTFAVVG), 109–129 (LWMLVLATALIGILVGAELPL), 158–178 (LGALLGGLAWPFILLPWLGMM), 180–200 (GAAAAGMINLLAALFVGCVLL), and 208–228 (QFIRAVVALLVAIAVLGTVLV). Residues 200-463 (LRHLLPRAQF…FQLCGPEGTE (264 aa)) form a spermidine synthase region. The region spanning 225–459 (TVLVRSDGIV…GDWGFQLCGP (235 aa)) is the PABS domain. Gln-255 is a binding site for S-methyl-5'-thioadenosine. A spermidine-binding site is contributed by Asp-307. Residues Glu-326 and 358–359 (DA) each bind S-methyl-5'-thioadenosine. Asp-379 functions as the Proton acceptor in the catalytic mechanism.

It belongs to the spermidine/spermine synthase family. In terms of assembly, homodimer or homotetramer.

It is found in the cell membrane. The catalysed reaction is S-adenosyl 3-(methylsulfanyl)propylamine + putrescine = S-methyl-5'-thioadenosine + spermidine + H(+). It functions in the pathway amine and polyamine biosynthesis; spermidine biosynthesis; spermidine from putrescine: step 1/1. Its function is as follows. Catalyzes the irreversible transfer of a propylamine group from the amino donor S-adenosylmethioninamine (decarboxy-AdoMet) to putrescine (1,4-diaminobutane) to yield spermidine. The polypeptide is Polyamine aminopropyltransferase (Corynebacterium efficiens (strain DSM 44549 / YS-314 / AJ 12310 / JCM 11189 / NBRC 100395)).